A 152-amino-acid chain; its full sequence is Aspartate carbamoyltransferase regulatory chain (152 aa).

Residues Cys109, Cys114, Cys138, and Cys141 each coordinate Zn(2+).

The protein belongs to the PyrI family. In terms of assembly, contains catalytic and regulatory chains. It depends on Zn(2+) as a cofactor.

In terms of biological role, involved in allosteric regulation of aspartate carbamoyltransferase. This chain is Aspartate carbamoyltransferase regulatory chain, found in Thermoplasma volcanium (strain ATCC 51530 / DSM 4299 / JCM 9571 / NBRC 15438 / GSS1).